The primary structure comprises 282 residues: Succinate dehydrogenase [ubiquinone] iron-sulfur subunit, mitochondrial (282 aa).

The region spanning 43–131 (YRFNPEAPGA…STKIYPLPHM (89 aa)) is the 2Fe-2S ferredoxin-type domain. [2Fe-2S] cluster-binding residues include C91, C96, C99, and C111. One can recognise a 4Fe-4S ferredoxin-type domain in the interval 174–204 (ERDRLDGLYECILCACCSTSCPSYWWNADKY). [4Fe-4S] cluster is bound by residues C184, C187, and C190. C194 provides a ligand contact to [3Fe-4S] cluster. W199 lines the a ubiquinone pocket. [3Fe-4S] cluster contacts are provided by C241 and C247. Position 251 (C251) interacts with [4Fe-4S] cluster.

It belongs to the succinate dehydrogenase/fumarate reductase iron-sulfur protein family. As to quaternary structure, component of complex II composed of four subunits: a flavoprotein (FP), an iron-sulfur protein (IP), and a cytochrome b composed of a large and a small subunit. The cofactor is [2Fe-2S] cluster. [3Fe-4S] cluster is required as a cofactor. [4Fe-4S] cluster serves as cofactor.

The protein localises to the mitochondrion inner membrane. The catalysed reaction is a quinone + succinate = fumarate + a quinol. It functions in the pathway carbohydrate metabolism; tricarboxylic acid cycle; fumarate from succinate (eukaryal route): step 1/1. Its function is as follows. Iron-sulfur protein (IP) subunit of succinate dehydrogenase (SDH) that is involved in complex II of the mitochondrial electron transport chain and is responsible for transferring electrons from succinate to ubiquinone (coenzyme Q). This is Succinate dehydrogenase [ubiquinone] iron-sulfur subunit, mitochondrial from Caenorhabditis briggsae.